Reading from the N-terminus, the 484-residue chain is tRNA sulfurtransferase (484 aa).

Residues 63–167 (KEMGERLTCM…DKRLFVIHSQ (105 aa)) enclose the THUMP domain. ATP is bound by residues 185 to 186 (LM), Lys-267, Gly-289, and Gln-298. A disulfide bridge links Cys-346 with Cys-457. A Rhodanese domain is found at 405–483 (ALAGQIVIDI…GHANVRVYRP (79 aa)). The Cysteine persulfide intermediate role is filled by Cys-457.

This sequence belongs to the ThiI family.

The protein localises to the cytoplasm. The catalysed reaction is [ThiI sulfur-carrier protein]-S-sulfanyl-L-cysteine + a uridine in tRNA + 2 reduced [2Fe-2S]-[ferredoxin] + ATP + H(+) = [ThiI sulfur-carrier protein]-L-cysteine + a 4-thiouridine in tRNA + 2 oxidized [2Fe-2S]-[ferredoxin] + AMP + diphosphate. It carries out the reaction [ThiS sulfur-carrier protein]-C-terminal Gly-Gly-AMP + S-sulfanyl-L-cysteinyl-[cysteine desulfurase] + AH2 = [ThiS sulfur-carrier protein]-C-terminal-Gly-aminoethanethioate + L-cysteinyl-[cysteine desulfurase] + A + AMP + 2 H(+). It participates in cofactor biosynthesis; thiamine diphosphate biosynthesis. In terms of biological role, catalyzes the ATP-dependent transfer of a sulfur to tRNA to produce 4-thiouridine in position 8 of tRNAs, which functions as a near-UV photosensor. Also catalyzes the transfer of sulfur to the sulfur carrier protein ThiS, forming ThiS-thiocarboxylate. This is a step in the synthesis of thiazole, in the thiamine biosynthesis pathway. The sulfur is donated as persulfide by IscS. This chain is tRNA sulfurtransferase, found in Pseudomonas fluorescens (strain Pf0-1).